Reading from the N-terminus, the 424-residue chain is tRNA(Ile)-lysidine synthase (424 aa).

26–31 (SGGIDS) provides a ligand contact to ATP.

The protein belongs to the tRNA(Ile)-lysidine synthase family.

The protein resides in the cytoplasm. The catalysed reaction is cytidine(34) in tRNA(Ile2) + L-lysine + ATP = lysidine(34) in tRNA(Ile2) + AMP + diphosphate + H(+). Functionally, ligates lysine onto the cytidine present at position 34 of the AUA codon-specific tRNA(Ile) that contains the anticodon CAU, in an ATP-dependent manner. Cytidine is converted to lysidine, thus changing the amino acid specificity of the tRNA from methionine to isoleucine. The chain is tRNA(Ile)-lysidine synthase from Streptococcus agalactiae serotype V (strain ATCC BAA-611 / 2603 V/R).